The sequence spans 286 residues: uncharacterized protein (286 aa).

Residue histidine 183 is the Proton donor of the active site. The active-site Nucleophile is the cysteine 277.

It belongs to the DDAH family.

This is an uncharacterized protein from Bacillus subtilis (strain 168).